Reading from the N-terminus, the 347-residue chain is VIP36-like protein (347 aa).

The first 43 residues, 1–43 (MAAASRPSWWQRWRRRAWARDGAKLLLFLLLLGSGPGPRHVRA), serve as a signal peptide directing secretion. Residues 44-312 (GQAVEYLKRE…VPPTPLSGLA (269 aa)) are Lumenal-facing. The L-type lectin-like domain occupies 48 to 273 (EYLKREHSLS…DVISLKLFEL (226 aa)). Residues S92 and D127 each contribute to the a carbohydrate site. The Ca(2+) site is built by D158, Y160, and N162. An a carbohydrate-binding site is contributed by 160–162 (YPN). N-linked (GlcNAc...) asparagine glycosylation occurs at N180. Residue H187 coordinates a carbohydrate. Residue D190 participates in Ca(2+) binding. C199 and C236 form a disulfide bridge. Position 257–259 (257–259 (GDL)) interacts with a carbohydrate. Residues 313 to 335 (LFLIVFFSLVFSVFAIVIGIILY) form a helical membrane-spanning segment. Topologically, residues 336–347 (NKWQDQSRKRFY) are cytoplasmic. An Endoplasmic reticulum retention signal motif is present at residues 343-345 (RKR).

It localises to the endoplasmic reticulum membrane. Its subcellular location is the golgi apparatus membrane. May be involved in the regulation of export from the endoplasmic reticulum of a subset of glycoproteins. May function as a regulator of ERGIC-53. The protein is VIP36-like protein (Lman2l) of Mus musculus (Mouse).